Reading from the N-terminus, the 87-residue chain is Conotoxin QcMNCL-XIII0.1 (87 aa).

The first 18 residues, 1–18, serve as a signal peptide directing secretion; sequence MNCLQLLLVLLLISTIAA. Residues 19–34 constitute a propeptide that is removed on maturation; that stretch reads LHGDGRVPQRRGRNIR.

Post-translationally, contains 4 disulfide bonds. As to expression, expressed by the venom duct.

Its subcellular location is the secreted. In terms of biological role, may interact and inhibit Cav3.1/CACNA1G calcium channels. In a ex vivo model, shows ability to block nerve signal transduction. The sequence is that of Conotoxin QcMNCL-XIII0.1 from Conus quercinus (Oak cone).